The primary structure comprises 87 residues: Putative outer membrane protein ArbH (87 aa).

Positions 1–23 (MKIKNSYLVIASLLYPISFISTA) are cleaved as a signal peptide.

It belongs to the porin LamB (TC 1.B.3) family.

It localises to the cell outer membrane. In terms of biological role, may be a sugar porin with a broad carbohydrate specificity. The protein is Putative outer membrane protein ArbH (arbH) of Dickeya chrysanthemi (Pectobacterium chrysanthemi).